A 142-amino-acid polypeptide reads, in one-letter code: Protein spalt-accessory (142 aa).

The signal sequence occupies residues 1–16 (MKLLIALFALVTAVNA). The disordered stretch occupies residues 75–142 (GFAGQGSPNQ…HHEHHGHHRH (68 aa)). Over residues 107-124 (GHFHENPHEYPEHHGDHH) the composition is skewed to basic and acidic residues. Positions 125-142 (REHHEHHGHHEHHGHHRH) are enriched in basic residues.

The protein localises to the secreted. In terms of biological role, likely to be involved in the establishment of the head. The polypeptide is Protein spalt-accessory (sala) (Drosophila melanogaster (Fruit fly)).